A 382-amino-acid chain; its full sequence is Galactokinase (382 aa).

Residue 34–37 (EHTD) participates in substrate binding. 124–130 (GAGLSSS) lines the ATP pocket. Serine 130 and glutamate 162 together coordinate Mg(2+). Aspartate 174 (proton acceptor) is an active-site residue. Tyrosine 223 provides a ligand contact to substrate.

The protein belongs to the GHMP kinase family. GalK subfamily.

The protein resides in the cytoplasm. It catalyses the reaction alpha-D-galactose + ATP = alpha-D-galactose 1-phosphate + ADP + H(+). Its pathway is carbohydrate metabolism; galactose metabolism. Functionally, catalyzes the transfer of the gamma-phosphate of ATP to D-galactose to form alpha-D-galactose-1-phosphate (Gal-1-P). This chain is Galactokinase, found in Escherichia coli O17:K52:H18 (strain UMN026 / ExPEC).